The chain runs to 593 residues: Eukaryotic peptide chain release factor subunit 1 (593 aa).

This sequence belongs to the eukaryotic release factor 1 family. In terms of assembly, heterodimer of two subunits, one of which binds GTP.

It localises to the cytoplasm. Its function is as follows. Directs the termination of nascent peptide synthesis (translation) in response to the termination codons UAA, UAG and UGA. The protein is Eukaryotic peptide chain release factor subunit 1 of Caenorhabditis elegans.